We begin with the raw amino-acid sequence, 51 residues long: Large ribosomal subunit protein bL33 (51 aa).

It belongs to the bacterial ribosomal protein bL33 family.

This Idiomarina loihiensis (strain ATCC BAA-735 / DSM 15497 / L2-TR) protein is Large ribosomal subunit protein bL33.